Consider the following 695-residue polypeptide: GATA zinc finger domain-containing protein 16 (695 aa).

Disordered stretches follow at residues 82–111, 134–304, and 422–472; these read SPIL…SNNA, VVNS…QQDK, and NNQF…KMRY. Composition is skewed to low complexity over residues 87-111 and 140-149; these read SQQQ…SNNA and KTTTTNNKPP. Positions 150–174 form a coiled coil; the sequence is KQSKRKEKERLEEEKQTVAQQQQYQ. Over residues 155-165 the composition is skewed to basic and acidic residues; the sequence is KEKERLEEEKQ. The span at 199–209 shows a compositional bias: polar residues; that stretch reads VSTTPYGNSQF. Low complexity predominate over residues 210–298; the sequence is NNNNNNNNNN…NSNSNNNNNN (89 aa). Polar residues predominate over residues 422 to 433; it reads NNQFSGDKQSAL. Residues 434–446 show a composition bias toward low complexity; it reads NNVKNSKGGNTNN. Residues 479 to 504 form a GATA-type zinc finger; that stretch reads CHTCGVTNTPEWRRGPNGAKTLCNAC. The tract at residues 523–646 is disordered; sequence NSTGVNITEP…TTNSITTPTT (124 aa). 2 stretches are compositionally biased toward low complexity: residues 544–556 and 564–646; these read DNNN…SDSN and GSNN…TPTT.

The sequence is that of GATA zinc finger domain-containing protein 16 (gtaP) from Dictyostelium discoideum (Social amoeba).